The chain runs to 295 residues: Bifunctional protein FolD (295 aa).

Residues 169 to 171 (GRS), serine 194, and isoleucine 235 each bind NADP(+).

This sequence belongs to the tetrahydrofolate dehydrogenase/cyclohydrolase family. In terms of assembly, homodimer.

It catalyses the reaction (6R)-5,10-methylene-5,6,7,8-tetrahydrofolate + NADP(+) = (6R)-5,10-methenyltetrahydrofolate + NADPH. The enzyme catalyses (6R)-5,10-methenyltetrahydrofolate + H2O = (6R)-10-formyltetrahydrofolate + H(+). The protein operates within one-carbon metabolism; tetrahydrofolate interconversion. Functionally, catalyzes the oxidation of 5,10-methylenetetrahydrofolate to 5,10-methenyltetrahydrofolate and then the hydrolysis of 5,10-methenyltetrahydrofolate to 10-formyltetrahydrofolate. The protein is Bifunctional protein FolD of Acaryochloris marina (strain MBIC 11017).